Reading from the N-terminus, the 146-residue chain is D-aminoacyl-tRNA deacylase (146 aa).

A Gly-cisPro motif, important for rejection of L-amino acids motif is present at residues 138-139 (GP).

It belongs to the DTD family. As to quaternary structure, homodimer.

It localises to the cytoplasm. It carries out the reaction glycyl-tRNA(Ala) + H2O = tRNA(Ala) + glycine + H(+). The enzyme catalyses a D-aminoacyl-tRNA + H2O = a tRNA + a D-alpha-amino acid + H(+). An aminoacyl-tRNA editing enzyme that deacylates mischarged D-aminoacyl-tRNAs. Also deacylates mischarged glycyl-tRNA(Ala), protecting cells against glycine mischarging by AlaRS. Acts via tRNA-based rather than protein-based catalysis; rejects L-amino acids rather than detecting D-amino acids in the active site. By recycling D-aminoacyl-tRNA to D-amino acids and free tRNA molecules, this enzyme counteracts the toxicity associated with the formation of D-aminoacyl-tRNA entities in vivo and helps enforce protein L-homochirality. The polypeptide is D-aminoacyl-tRNA deacylase (Xanthomonas axonopodis pv. citri (strain 306)).